A 388-amino-acid chain; its full sequence is Xylose isomerase (388 aa).

Active-site residues include His54 and Asp57. Mg(2+)-binding residues include Glu181, Glu217, His220, Asp245, Asp255, Asp257, and Asp287.

It belongs to the xylose isomerase family. In terms of assembly, homotetramer. It depends on Mg(2+) as a cofactor.

Its subcellular location is the cytoplasm. It catalyses the reaction alpha-D-xylose = alpha-D-xylulofuranose. Its function is as follows. Involved in D-xylose catabolism. This Streptomyces rubiginosus protein is Xylose isomerase (xylA).